Here is a 323-residue protein sequence, read N- to C-terminus: Octaprenyl diphosphate synthase (323 aa).

Residues Lys-45, Arg-48, and His-77 each contribute to the isopentenyl diphosphate site. Residues Asp-84 and Asp-88 each coordinate Mg(2+). An all-trans-polyprenyl diphosphate is bound at residue Arg-93. Position 94 (Arg-94) interacts with isopentenyl diphosphate. An all-trans-polyprenyl diphosphate-binding residues include Lys-170, Thr-171, and Gln-208.

This sequence belongs to the FPP/GGPP synthase family. Mg(2+) serves as cofactor.

The enzyme catalyses 5 isopentenyl diphosphate + (2E,6E)-farnesyl diphosphate = all-trans-octaprenyl diphosphate + 5 diphosphate. In terms of biological role, supplies octaprenyl diphosphate, the precursor for the side chain of the isoprenoid quinones ubiquinone and menaquinone. The sequence is that of Octaprenyl diphosphate synthase (ispB) from Escherichia coli (strain K12).